An 82-amino-acid chain; its full sequence is Translational regulator CsrA (82 aa).

Belongs to the CsrA/RsmA family. Homodimer; the beta-strands of each monomer intercalate to form a hydrophobic core, while the alpha-helices form wings that extend away from the core.

The protein localises to the cytoplasm. Its function is as follows. A translational regulator that binds mRNA to regulate translation initiation and/or mRNA stability. Usually binds in the 5'-UTR at or near the Shine-Dalgarno sequence preventing ribosome-binding, thus repressing translation. Its main target seems to be the major flagellin gene, while its function is anatagonized by FliW. This Geobacillus kaustophilus (strain HTA426) protein is Translational regulator CsrA.